A 179-amino-acid polypeptide reads, in one-letter code: MPTPEKARQIEEISEILRTASLAILTDYRGLSVADMTAFRRRLQEQQANFRVVKNTLTRIAAERTGTEVITPLLEGPTALVYSMGDPVAAAKLTLEFARQSRILSVKGGLLAGRLLSAADVEALATLPPREELLAKVVGGLQAPLYGLVSVLSGPIRGLLYVLQARVRQLGGEEAAEAA.

The protein belongs to the universal ribosomal protein uL10 family. As to quaternary structure, part of the ribosomal stalk of the 50S ribosomal subunit. The N-terminus interacts with L11 and the large rRNA to form the base of the stalk. The C-terminus forms an elongated spine to which L12 dimers bind in a sequential fashion forming a multimeric L10(L12)X complex.

Functionally, forms part of the ribosomal stalk, playing a central role in the interaction of the ribosome with GTP-bound translation factors. The sequence is that of Large ribosomal subunit protein uL10 from Thermomicrobium roseum (strain ATCC 27502 / DSM 5159 / P-2).